The sequence spans 161 residues: Small ribosomal subunit protein bS16 (161 aa).

Residues 114–161 (EGGPTTEATKPKKKSPAKKAKGGEGDADAAAEKVEASAEGEQTESAES) are disordered. A compositionally biased stretch (basic residues) spans 124–133 (PKKKSPAKKA).

This sequence belongs to the bacterial ribosomal protein bS16 family.

This chain is Small ribosomal subunit protein bS16, found in Mycobacterium marinum (strain ATCC BAA-535 / M).